A 424-amino-acid chain; its full sequence is Phosphomethylpyrimidine synthase (424 aa).

Substrate contacts are provided by residues Asn-66, Met-95, Tyr-124, His-163, 185 to 187 (SRG), 226 to 229 (DGMR), and Glu-265. His-269 serves as a coordination point for Zn(2+). Phe-292 contacts substrate. His-333 serves as a coordination point for Zn(2+). 3 residues coordinate [4Fe-4S] cluster: Cys-408, Cys-411, and Cys-415.

This sequence belongs to the ThiC family. [4Fe-4S] cluster is required as a cofactor.

The catalysed reaction is 5-amino-1-(5-phospho-beta-D-ribosyl)imidazole + S-adenosyl-L-methionine = 4-amino-2-methyl-5-(phosphooxymethyl)pyrimidine + CO + 5'-deoxyadenosine + formate + L-methionine + 3 H(+). Its pathway is cofactor biosynthesis; thiamine diphosphate biosynthesis. Functionally, catalyzes the synthesis of the hydroxymethylpyrimidine phosphate (HMP-P) moiety of thiamine from aminoimidazole ribotide (AIR) in a radical S-adenosyl-L-methionine (SAM)-dependent reaction. This chain is Phosphomethylpyrimidine synthase, found in Thermotoga sp. (strain RQ2).